Consider the following 227-residue polypeptide: Uracil-DNA glycosylase (227 aa).

The active-site Proton acceptor is the Asp64.

This sequence belongs to the uracil-DNA glycosylase (UDG) superfamily. UNG family.

It localises to the cytoplasm. It carries out the reaction Hydrolyzes single-stranded DNA or mismatched double-stranded DNA and polynucleotides, releasing free uracil.. In terms of biological role, excises uracil residues from the DNA which can arise as a result of misincorporation of dUMP residues by DNA polymerase or due to deamination of cytosine. In Serratia proteamaculans (strain 568), this protein is Uracil-DNA glycosylase.